The following is a 216-amino-acid chain: Peptide methionine sulfoxide reductase MsrA (216 aa).

The active site involves C54.

This sequence belongs to the MsrA Met sulfoxide reductase family.

The enzyme catalyses L-methionyl-[protein] + [thioredoxin]-disulfide + H2O = L-methionyl-(S)-S-oxide-[protein] + [thioredoxin]-dithiol. The catalysed reaction is [thioredoxin]-disulfide + L-methionine + H2O = L-methionine (S)-S-oxide + [thioredoxin]-dithiol. Its function is as follows. Has an important function as a repair enzyme for proteins that have been inactivated by oxidation. Catalyzes the reversible oxidation-reduction of methionine sulfoxide in proteins to methionine. The polypeptide is Peptide methionine sulfoxide reductase MsrA (Xanthomonas euvesicatoria pv. vesicatoria (strain 85-10) (Xanthomonas campestris pv. vesicatoria)).